The sequence spans 151 residues: Sperm surface protein Sp17 (151 aa).

Positions 68-98 (FYNNHAFEEQEPPEKSDPKQEESQIPGKEEE) are enriched in basic and acidic residues. Disordered stretches follow at residues 68 to 115 (FYNN…EKEE) and 130 to 151 (AREE…EENK). Residues 114–143 (EEVAAVKIQAAFRGHVAREEVKKMKTDSLQ) enclose the IQ domain.

As to quaternary structure, homodimer. May interact with ROPN1. As to expression, testis- and sperm-specific.

It is found in the membrane. Its function is as follows. Sperm surface zona pellucida binding protein. Helps to bind spermatozoa to the zona pellucida with high affinity. Might function in binding zona pellucida and carbohydrates. The chain is Sperm surface protein Sp17 (SPA17) from Macaca fascicularis (Crab-eating macaque).